The sequence spans 271 residues: Putative pyruvate, phosphate dikinase regulatory protein 2 (271 aa).

Position 151 to 158 (151 to 158 (GVSRTSKT)) interacts with ADP.

This sequence belongs to the pyruvate, phosphate/water dikinase regulatory protein family. PDRP subfamily.

The enzyme catalyses N(tele)-phospho-L-histidyl/L-threonyl-[pyruvate, phosphate dikinase] + ADP = N(tele)-phospho-L-histidyl/O-phospho-L-threonyl-[pyruvate, phosphate dikinase] + AMP + H(+). It carries out the reaction N(tele)-phospho-L-histidyl/O-phospho-L-threonyl-[pyruvate, phosphate dikinase] + phosphate + H(+) = N(tele)-phospho-L-histidyl/L-threonyl-[pyruvate, phosphate dikinase] + diphosphate. In terms of biological role, bifunctional serine/threonine kinase and phosphorylase involved in the regulation of the pyruvate, phosphate dikinase (PPDK) by catalyzing its phosphorylation/dephosphorylation. This chain is Putative pyruvate, phosphate dikinase regulatory protein 2, found in Staphylococcus haemolyticus (strain JCSC1435).